The following is a 230-amino-acid chain: Phosducin-like protein 1 (230 aa).

Met1 is modified (N-acetylmethionine). Positions 16–166 (AEKDKHTTVD…VVGYKNGLEK (151 aa)) constitute a Phosducin domain. The stretch at 25–79 (DSDDKSSGEENLDELLNELDRELDEDHEFLSAYRSERLQQISDHLKQVKKNVEDD) forms a coiled coil. The interval 81-230 (YGRLQCIDNE…RSESDSDLDI (150 aa)) is thioredoxin fold.

Belongs to the phosducin family. As to quaternary structure, interacts with the G protein beta-gamma subunit complex (STE4-STE18 complex).

It is found in the cytoplasm. In terms of biological role, not essential for growth. Inhibits early G-protein signaling events following pheromone stimulation. May help create heterodimerizable beta-tubulin by facilitating the efficient transfer of nascent beta-tubulin polypeptides to the folding apparatus. In Saccharomyces cerevisiae (strain ATCC 204508 / S288c) (Baker's yeast), this protein is Phosducin-like protein 1 (PLP1).